Here is a 279-residue protein sequence, read N- to C-terminus: 3-methyl-2-oxobutanoate hydroxymethyltransferase (279 aa).

Mg(2+) is bound by residues Asp43 and Asp82. 3-methyl-2-oxobutanoate is bound by residues 43-44, Asp82, and Lys112; that span reads DS. Glu114 serves as a coordination point for Mg(2+). Glu181 (proton acceptor) is an active-site residue.

It belongs to the PanB family. As to quaternary structure, homodecamer; pentamer of dimers. Mg(2+) is required as a cofactor.

The protein localises to the cytoplasm. The enzyme catalyses 3-methyl-2-oxobutanoate + (6R)-5,10-methylene-5,6,7,8-tetrahydrofolate + H2O = 2-dehydropantoate + (6S)-5,6,7,8-tetrahydrofolate. Its pathway is cofactor biosynthesis; (R)-pantothenate biosynthesis; (R)-pantoate from 3-methyl-2-oxobutanoate: step 1/2. In terms of biological role, catalyzes the reversible reaction in which hydroxymethyl group from 5,10-methylenetetrahydrofolate is transferred onto alpha-ketoisovalerate to form ketopantoate. The chain is 3-methyl-2-oxobutanoate hydroxymethyltransferase from Bacillus pumilus (strain SAFR-032).